Here is a 310-residue protein sequence, read N- to C-terminus: Ribosomal RNA small subunit methyltransferase H (310 aa).

Residues 33–35 (GGH), Asp52, Phe79, Asp98, and Gln105 contribute to the S-adenosyl-L-methionine site.

This sequence belongs to the methyltransferase superfamily. RsmH family.

Its subcellular location is the cytoplasm. It catalyses the reaction cytidine(1402) in 16S rRNA + S-adenosyl-L-methionine = N(4)-methylcytidine(1402) in 16S rRNA + S-adenosyl-L-homocysteine + H(+). Specifically methylates the N4 position of cytidine in position 1402 (C1402) of 16S rRNA. This chain is Ribosomal RNA small subunit methyltransferase H, found in Campylobacter jejuni (strain RM1221).